Here is a 332-residue protein sequence, read N- to C-terminus: Serpentine receptor class alpha-10 (332 aa).

At M1–N26 the chain is on the extracellular side. The helical transmembrane segment at V27–I47 threads the bilayer. Residues L48–T64 are Cytoplasmic-facing. A helical membrane pass occupies residues S65 to I85. Topologically, residues R86–H109 are extracellular. The helical transmembrane segment at V110–A132 threads the bilayer. At T133–P146 the chain is on the cytoplasmic side. A helical transmembrane segment spans residues G147–I167. Topologically, residues G168–V191 are extracellular. A helical membrane pass occupies residues F192–F212. Topologically, residues A213–R239 are cytoplasmic. Residues I240–L260 form a helical membrane-spanning segment. Topologically, residues T261–N276 are extracellular. Residues I277–H297 form a helical membrane-spanning segment. The Cytoplasmic segment spans residues R298–G332.

This sequence belongs to the nematode receptor-like protein sra family.

The protein resides in the membrane. The chain is Serpentine receptor class alpha-10 from Caenorhabditis briggsae.